A 41-amino-acid chain; its full sequence is Photosystem II reaction center protein J (41 aa).

A helical membrane pass occupies residues 9–29; sequence IPLWFVGMVGGLAALGLLAIF.

This sequence belongs to the PsbJ family. In terms of assembly, PSII is composed of 1 copy each of membrane proteins PsbA, PsbB, PsbC, PsbD, PsbE, PsbF, PsbH, PsbI, PsbJ, PsbK, PsbL, PsbM, PsbT, PsbX, PsbY, PsbZ, Psb30/Ycf12, at least 3 peripheral proteins of the oxygen-evolving complex and a large number of cofactors. It forms dimeric complexes.

It is found in the plastid. The protein resides in the chloroplast thylakoid membrane. One of the components of the core complex of photosystem II (PSII). PSII is a light-driven water:plastoquinone oxidoreductase that uses light energy to abstract electrons from H(2)O, generating O(2) and a proton gradient subsequently used for ATP formation. It consists of a core antenna complex that captures photons, and an electron transfer chain that converts photonic excitation into a charge separation. This is Photosystem II reaction center protein J from Ostreococcus tauri.